The primary structure comprises 422 residues: Probable protease eep (422 aa).

Residue H18 participates in Zn(2+) binding. E19 is an active-site residue. H22 serves as a coordination point for Zn(2+). The next 3 membrane-spanning stretches (helical) occupy residues 176-196 (FAGPMNNFILGFILFTLAVFL), 349-369 (VVFLMAMLSMNLGIINLLPIP), and 394-414 (EGIITLIGFGFVMVLMVLVTW). A PDZ domain is found at 179–273 (PMNNFILGFI…EEQLTVTPEK (95 aa)).

Belongs to the peptidase M50B family. It depends on Zn(2+) as a cofactor.

The protein localises to the cell membrane. Involved in production of the peptide pheromone cAD1. This Enterococcus faecalis (strain ATCC 700802 / V583) protein is Probable protease eep (eep).